A 200-amino-acid chain; its full sequence is 2,3-bisphosphoglycerate-dependent phosphoglycerate mutase (200 aa).

The active-site Tele-phosphohistidine intermediate is His-9. Residue His-142 is part of the active site.

The protein belongs to the phosphoglycerate mutase family. As to quaternary structure, homodimer.

The catalysed reaction is (2R)-2-phosphoglycerate = (2R)-3-phosphoglycerate. It functions in the pathway carbohydrate degradation; glycolysis; pyruvate from D-glyceraldehyde 3-phosphate: step 3/5. In terms of biological role, catalyzes the interconversion of 2-phosphoglycerate and 3-phosphoglycerate. This chain is 2,3-bisphosphoglycerate-dependent phosphoglycerate mutase, found in Thermoplasma acidophilum (strain ATCC 25905 / DSM 1728 / JCM 9062 / NBRC 15155 / AMRC-C165).